Reading from the N-terminus, the 214-residue chain is High frequency lysogenization protein HflD homolog (214 aa).

Belongs to the HflD family.

It is found in the cytoplasm. The protein localises to the cell inner membrane. This Chromohalobacter salexigens (strain ATCC BAA-138 / DSM 3043 / CIP 106854 / NCIMB 13768 / 1H11) protein is High frequency lysogenization protein HflD homolog.